The chain runs to 438 residues: Serine hydroxymethyltransferase 1 (438 aa).

(6S)-5,6,7,8-tetrahydrofolate contacts are provided by residues leucine 130 and 134–136 (GHL). Lysine 239 carries the post-translational modification N6-(pyridoxal phosphate)lysine.

It belongs to the SHMT family. Homodimer. Pyridoxal 5'-phosphate serves as cofactor.

It is found in the cytoplasm. It carries out the reaction (6R)-5,10-methylene-5,6,7,8-tetrahydrofolate + glycine + H2O = (6S)-5,6,7,8-tetrahydrofolate + L-serine. The protein operates within one-carbon metabolism; tetrahydrofolate interconversion. Its pathway is amino-acid biosynthesis; glycine biosynthesis; glycine from L-serine: step 1/1. Its function is as follows. Catalyzes the reversible interconversion of serine and glycine with tetrahydrofolate (THF) serving as the one-carbon carrier. This reaction serves as the major source of one-carbon groups required for the biosynthesis of purines, thymidylate, methionine, and other important biomolecules. Also exhibits THF-independent aldolase activity toward beta-hydroxyamino acids, producing glycine and aldehydes, via a retro-aldol mechanism. Thus, is able to catalyze the cleavage of L-allo-threonine. This Mycobacterium tuberculosis (strain ATCC 25618 / H37Rv) protein is Serine hydroxymethyltransferase 1.